A 30-amino-acid chain; its full sequence is Alpha-conotoxin EIVA (30 aa).

3 cysteine pairs are disulfide-bonded: C2–C16, C3–C11, and C14–C24. Residues P7, P13, P21, P22, and P27 each carry the 4-hydroxyproline modification. G30 carries the glycine amide modification.

In terms of tissue distribution, expressed by the venom duct.

Its subcellular location is the secreted. Its function is as follows. Alpha-conotoxins act on postsynaptic membranes, they bind to the nicotinic acetylcholine receptors (nAChR) and thus inhibit them. This toxin binds with high affinity to both fetal (alpha-1-beta-1-epsilon-delta (CHRNA1-CHRNB1-CHRND-CHRNE) subunits) and adult (alpha-1/beta-1/gamma/delta subunits) mammalian muscle nicotinic acetylcholine receptors (nAChR). This Conus ermineus (Agate cone) protein is Alpha-conotoxin EIVA.